A 329-amino-acid polypeptide reads, in one-letter code: Phosphate acetyltransferase (329 aa).

It belongs to the phosphate acetyltransferase and butyryltransferase family.

It is found in the cytoplasm. The enzyme catalyses acetyl-CoA + phosphate = acetyl phosphate + CoA. The protein operates within metabolic intermediate biosynthesis; acetyl-CoA biosynthesis; acetyl-CoA from acetate: step 2/2. This Staphylococcus epidermidis (strain ATCC 12228 / FDA PCI 1200) protein is Phosphate acetyltransferase (pta).